The following is a 241-amino-acid chain: Protein unc-119 homolog B-B (241 aa).

Positions 1-46 (MSGSNREAALAGQPKDERKKSGGGVINRLKARRVQGKESGTSDQSS) are disordered. Residue tyrosine 132 coordinates tetradecanoate.

It belongs to the PDE6D/unc-119 family.

It localises to the cell projection. The protein resides in the cilium. In terms of biological role, myristoyl-binding protein that acts as a cargo adapter: specifically binds the myristoyl moiety of a subset of N-terminally myristoylated proteins and is required for their localization. Plays a key role in localization of proteins to the primary cilium membrane. This chain is Protein unc-119 homolog B-B (unc119b-b), found in Xenopus laevis (African clawed frog).